Consider the following 139-residue polypeptide: Ribulose bisphosphate carboxylase small subunit (139 aa).

It belongs to the RuBisCO small chain family. Heterohexadecamer of 8 large and 8 small subunits.

It is found in the plastid. The protein resides in the chloroplast. Its function is as follows. RuBisCO catalyzes two reactions: the carboxylation of D-ribulose 1,5-bisphosphate, the primary event in carbon dioxide fixation, as well as the oxidative fragmentation of the pentose substrate in the photorespiration process. Both reactions occur simultaneously and in competition at the same active site. Although the small subunit is not catalytic it is essential for maximal activity. The sequence is that of Ribulose bisphosphate carboxylase small subunit from Pylaiella littoralis (Seaweed).